We begin with the raw amino-acid sequence, 138 residues long: Cell division protein SepF (138 aa).

It belongs to the SepF family. As to quaternary structure, homodimer. Interacts with FtsZ.

It localises to the cytoplasm. Its function is as follows. Cell division protein that is part of the divisome complex and is recruited early to the Z-ring. Probably stimulates Z-ring formation, perhaps through the cross-linking of FtsZ protofilaments. Its function overlaps with FtsA. The sequence is that of Cell division protein SepF from Limosilactobacillus reuteri (strain DSM 20016) (Lactobacillus reuteri).